The chain runs to 345 residues: Mitochondrial substrate carrier family protein J (345 aa).

The Mitochondrial intermembrane segment spans residues 1–31 (MSSSHTIQETKEVHTKTNKRIQWDDLDPKRY). 3 Solcar repeats span residues 30 to 118 (RYYF…VKQG), 129 to 217 (DLLF…SKSK), and 255 to 342 (EDPI…VKKL). Residues 32 to 52 (YFYNFLLGGSIDLLMFPLDVI) form a helical membrane-spanning segment. Over 53 to 88 (RTRLQVQGSQNVIQSFPQYNGTFDGFKKLIRLEGKR) the chain is Mitochondrial matrix. The chain crosses the membrane as a helical span at residues 89-110 (ALYKGFLTSECGYLCSRAIYFG). Topologically, residues 111–129 (SYEFVKQGFLKGRSDSDSD) are mitochondrial intermembrane. The helical transmembrane segment at 130-150 (LLFVTTISGAISEALASVIWV) threads the bilayer. At 151–191 (PFDVATQSVQIQGSLSKPKYKGGSDVFKKIYGERGIKGLYK) the chain is on the mitochondrial matrix side. The chain crosses the membrane as a helical span at residues 192 to 208 (GFGATIIRNVPYSGIWW). At 209-257 (GTYEISKSKLTQFNIRQKLGLKERSSHSLAVSAEIDKNNPSHEVENEDP) the chain is on the mitochondrial intermembrane side. Residues 258-278 (IIHFISGFFAAVFATSITNPL) traverse the membrane as a helical segment. Topologically, residues 279–316 (DVAKTRLQTGVFPENEKPNFYTIIKSTIRKEGIRALWK) are mitochondrial matrix. A helical membrane pass occupies residues 317 to 337 (GLVPSLLTSTPYSMISIFLYE). Over 338-345 (EVKKLSLK) the chain is Mitochondrial intermembrane.

The protein belongs to the mitochondrial carrier (TC 2.A.29) family.

The protein resides in the mitochondrion inner membrane. Mitochondrial solute carriers shuttle metabolites, nucleotides, and cofactors through the mitochondrial inner membrane. The sequence is that of Mitochondrial substrate carrier family protein J (mcfJ) from Dictyostelium discoideum (Social amoeba).